A 240-amino-acid polypeptide reads, in one-letter code: Eukaryotic translation initiation factor 3 subunit K (240 aa).

A PCI domain is found at 41–221; that stretch reads YDKDIVLTIL…TIKTRNIDEK (181 aa).

It belongs to the eIF-3 subunit K family. Component of the eukaryotic translation initiation factor 3 (eIF-3) complex.

Its subcellular location is the cytoplasm. In terms of biological role, component of the eukaryotic translation initiation factor 3 (eIF-3) complex, which is involved in protein synthesis of a specialized repertoire of mRNAs and, together with other initiation factors, stimulates binding of mRNA and methionyl-tRNAi to the 40S ribosome. The eIF-3 complex specifically targets and initiates translation of a subset of mRNAs involved in cell proliferation. This Caenorhabditis briggsae protein is Eukaryotic translation initiation factor 3 subunit K.